We begin with the raw amino-acid sequence, 304 residues long: UDP-N-acetylenolpyruvoylglucosamine reductase (304 aa).

An FAD-binding PCMH-type domain is found at 34–198 (IGGKADFLVW…LEVVFALRPG (165 aa)). Arg177 is a catalytic residue. The active-site Proton donor is the Ser227. Residue Glu297 is part of the active site.

Belongs to the MurB family. FAD serves as cofactor.

The protein resides in the cytoplasm. It carries out the reaction UDP-N-acetyl-alpha-D-muramate + NADP(+) = UDP-N-acetyl-3-O-(1-carboxyvinyl)-alpha-D-glucosamine + NADPH + H(+). The protein operates within cell wall biogenesis; peptidoglycan biosynthesis. Functionally, cell wall formation. The protein is UDP-N-acetylenolpyruvoylglucosamine reductase of Geobacillus kaustophilus (strain HTA426).